The chain runs to 291 residues: Pre-mRNA-splicing factor SPP381 (291 aa).

Disordered stretches follow at residues 1–99 (MSFR…PLPR) and 239–266 (EKEK…YKIT). 2 stretches are compositionally biased toward polar residues: residues 28–41 (QNVS…SLSH) and 52–62 (TGKNRTPNDGQ). The span at 63–91 (ESNESDGSPESDESPESEESSDNSDSSDS) shows a compositional bias: acidic residues. The segment covering 239 to 258 (EKEKLDHKKQRSAEKVEKSH) has biased composition (basic and acidic residues).

This sequence belongs to the SPP381 family. Component of the U4/U6-U5 tri-snRNP complex composed of the U4, U6 and U5 snRNAs and at least PRP3, PRP4, PRP6, PRP8, PRP18, PRP31, PRP38, SNU13, SNU23, SNU66, SNU114, SPP381, SMB1, SMD1, SMD2, SMD3, SMX2, SMX3, LSM2, LSM3, LSM4, LSM5, LSM6, LSM7, LSM8, BRR2 and DIB1. Interacts with PRP38.

It localises to the nucleus. Component of the spliceosome and rRNA processing machinery. In association with the spliceosomal U4/U6.U5 tri-snRNP particle, required for splicing of pre-mRNA. The protein is Pre-mRNA-splicing factor SPP381 (SPP381) of Saccharomyces cerevisiae (strain ATCC 204508 / S288c) (Baker's yeast).